We begin with the raw amino-acid sequence, 321 residues long: Probable cell division protein WhiA (321 aa).

Positions 276–309 (NLKELGELLEPPVGKSGVNHRLRKLEKIAEQLHQ) form a DNA-binding region, H-T-H motif.

Belongs to the WhiA family.

Involved in cell division and chromosome segregation. This chain is Probable cell division protein WhiA, found in Natranaerobius thermophilus (strain ATCC BAA-1301 / DSM 18059 / JW/NM-WN-LF).